We begin with the raw amino-acid sequence, 139 residues long: Endoribonuclease YbeY (139 aa).

The Zn(2+) site is built by histidine 105, histidine 109, and aspartate 115.

The protein belongs to the endoribonuclease YbeY family. Requires Zn(2+) as cofactor.

The protein localises to the cytoplasm. Single strand-specific metallo-endoribonuclease involved in late-stage 70S ribosome quality control and in maturation of the 3' terminus of the 16S rRNA. The polypeptide is Endoribonuclease YbeY (Flavobacterium johnsoniae (strain ATCC 17061 / DSM 2064 / JCM 8514 / BCRC 14874 / CCUG 350202 / NBRC 14942 / NCIMB 11054 / UW101) (Cytophaga johnsonae)).